The primary structure comprises 60 residues: Large ribosomal subunit protein bL32 (60 aa).

This sequence belongs to the bacterial ribosomal protein bL32 family.

This Geobacter sulfurreducens (strain ATCC 51573 / DSM 12127 / PCA) protein is Large ribosomal subunit protein bL32.